A 78-amino-acid chain; its full sequence is Translational regulator CsrA (78 aa).

This sequence belongs to the CsrA/RsmA family. Homodimer; the beta-strands of each monomer intercalate to form a hydrophobic core, while the alpha-helices form wings that extend away from the core.

It localises to the cytoplasm. Its function is as follows. A translational regulator that binds mRNA to regulate translation initiation and/or mRNA stability. Usually binds in the 5'-UTR at or near the Shine-Dalgarno sequence preventing ribosome-binding, thus repressing translation. Its main target seems to be the major flagellin gene, while its function is anatagonized by FliW. In Borrelia hermsii (strain HS1 / DAH), this protein is Translational regulator CsrA.